The primary structure comprises 85 residues: Large ribosomal subunit protein bL27 (85 aa).

The protein belongs to the bacterial ribosomal protein bL27 family.

The polypeptide is Large ribosomal subunit protein bL27 (Xylella fastidiosa (strain Temecula1 / ATCC 700964)).